A 308-amino-acid chain; its full sequence is ATP synthase gamma chain (308 aa).

This sequence belongs to the ATPase gamma chain family. In terms of assembly, F-type ATPases have 2 components, CF(1) - the catalytic core - and CF(0) - the membrane proton channel. CF(1) has five subunits: alpha(3), beta(3), gamma(1), delta(1), epsilon(1). CF(0) has three main subunits: a, b and c.

It localises to the cell membrane. In terms of biological role, produces ATP from ADP in the presence of a proton gradient across the membrane. The gamma chain is believed to be important in regulating ATPase activity and the flow of protons through the CF(0) complex. The protein is ATP synthase gamma chain of Mycobacteroides abscessus (strain ATCC 19977 / DSM 44196 / CCUG 20993 / CIP 104536 / JCM 13569 / NCTC 13031 / TMC 1543 / L948) (Mycobacterium abscessus).